The primary structure comprises 348 residues: Caricain (348 aa).

A signal peptide spans M1–C16. A propeptide spans L17–N132 (activation peptide). N-linked (GlcNAc...) asparagine glycosylation is present at N86. 3 disulfides stabilise this stretch: C154-C195, C188-C227, and C285-C336. C157 is an active-site residue. C157 is an E64 binding site. Catalysis depends on residues H291 and N311.

The protein belongs to the peptidase C1 family. In terms of assembly, monomer.

It carries out the reaction Hydrolysis of proteins with broad specificity for peptide bonds, similar to those of papain and chymopapain.. Repressed by the active-site-directed cysteine protease inhibitor E64 (L-trans-epoxysuccinyl-leucylamide-(4-guanido)-butane) produced by Aspergillus japonicus. In terms of biological role, cysteine proteinase with a high level of diversity in substrate specificity. The sequence is that of Caricain from Carica papaya (Papaya).